Consider the following 100-residue polypeptide: NAD(P)H-quinone oxidoreductase subunit 4L, chloroplastic (100 aa).

3 helical membrane-spanning segments follow: residues 1–21, 31–51, and 60–80; these read MLEHVLVLSAYLFSVGLYGLI, ICLELIFNAVNINFVTFSDFF, and IFAIFVIAIAAAEAAIGLAIL.

The protein belongs to the complex I subunit 4L family. In terms of assembly, NDH is composed of at least 16 different subunits, 5 of which are encoded in the nucleus.

The protein resides in the plastid. It localises to the chloroplast thylakoid membrane. It catalyses the reaction a plastoquinone + NADH + (n+1) H(+)(in) = a plastoquinol + NAD(+) + n H(+)(out). It carries out the reaction a plastoquinone + NADPH + (n+1) H(+)(in) = a plastoquinol + NADP(+) + n H(+)(out). In terms of biological role, NDH shuttles electrons from NAD(P)H:plastoquinone, via FMN and iron-sulfur (Fe-S) centers, to quinones in the photosynthetic chain and possibly in a chloroplast respiratory chain. The immediate electron acceptor for the enzyme in this species is believed to be plastoquinone. Couples the redox reaction to proton translocation, and thus conserves the redox energy in a proton gradient. This Trachelium caeruleum (Blue throatwort) protein is NAD(P)H-quinone oxidoreductase subunit 4L, chloroplastic.